A 276-amino-acid chain; its full sequence is MPELPEVETLKNSLKDKLIELIIENVELKRDNLRYKLSPLLASEISNTNILDVRRRAKYLIIDFNNDYSLIVHLGMSGRFTLQPSNYETKKHDHVIFDLSNGEKLIFNDTRRFGMIYNFKTNFLEKELFNNLGVEPLSDSLTLEYLKSKLITRKIPIKNLIMDNRIIVGVGNIYASESLYLARIHPDKLGSNLRDDEIESLIKSIREVLAKAITAGGTTLKDFVNGDNKPGYFTQQLTVYGRERQNCLNCSSTIIKTKHSGRSTFYCRTCQYSEFT.

P2 functions as the Schiff-base intermediate with DNA in the catalytic mechanism. The active-site Proton donor is E3. Catalysis depends on K58, which acts as the Proton donor; for beta-elimination activity. Residues H92, R111, and R153 each coordinate DNA. The FPG-type zinc finger occupies 238 to 272 (TVYGRERQNCLNCSSTIIKTKHSGRSTFYCRTCQY). The active-site Proton donor; for delta-elimination activity is the R262.

The protein belongs to the FPG family. Monomer. Zn(2+) is required as a cofactor.

It catalyses the reaction Hydrolysis of DNA containing ring-opened 7-methylguanine residues, releasing 2,6-diamino-4-hydroxy-5-(N-methyl)formamidopyrimidine.. The enzyme catalyses 2'-deoxyribonucleotide-(2'-deoxyribose 5'-phosphate)-2'-deoxyribonucleotide-DNA = a 3'-end 2'-deoxyribonucleotide-(2,3-dehydro-2,3-deoxyribose 5'-phosphate)-DNA + a 5'-end 5'-phospho-2'-deoxyribonucleoside-DNA + H(+). In terms of biological role, involved in base excision repair of DNA damaged by oxidation or by mutagenic agents. Acts as a DNA glycosylase that recognizes and removes damaged bases. Has a preference for oxidized purines, such as 7,8-dihydro-8-oxoguanine (8-oxoG). Has AP (apurinic/apyrimidinic) lyase activity and introduces nicks in the DNA strand. Cleaves the DNA backbone by beta-delta elimination to generate a single-strand break at the site of the removed base with both 3'- and 5'-phosphates. This is Formamidopyrimidine-DNA glycosylase from Rickettsia felis (strain ATCC VR-1525 / URRWXCal2) (Rickettsia azadi).